The sequence spans 163 residues: NADH-quinone oxidoreductase subunit 9 (163 aa).

4Fe-4S ferredoxin-type domains lie at 54–84 (LRRYPNGEERCIACKLCEAVCPAQAITIDAE) and 94–123 (TRYDIDMTKCIYCGFCQEACPVDAIVEGPN). Residues Cys64, Cys67, Cys70, Cys74, Cys103, Cys106, Cys109, and Cys113 each coordinate [4Fe-4S] cluster.

The protein belongs to the complex I 23 kDa subunit family. In terms of assembly, NDH-1 is composed of at least 14 different subunits, Nqo1 to Nqo14. The complex has a L-shaped structure, with the hydrophobic arm (subunits Nqo7, Nqo8, Nqo10 to Nqo14) embedded in the inner membrane and the hydrophilic peripheral arm (subunits Nqo1 to Nqo6, Nqo9) protruding into the bacterial cytoplasm. The hydrophilic domain contains all the redox centers. It depends on [4Fe-4S] cluster as a cofactor.

The protein localises to the cell inner membrane. It carries out the reaction a quinone + NADH + 5 H(+)(in) = a quinol + NAD(+) + 4 H(+)(out). NDH-1 shuttles electrons from NADH, via FMN and iron-sulfur (Fe-S) centers, to quinones in the respiratory chain. The immediate electron acceptor for the enzyme in this species is believed to be ubiquinone. Couples the redox reaction to proton translocation (for every two electrons transferred, four hydrogen ions are translocated across the cytoplasmic membrane), and thus conserves the redox energy in a proton gradient. This is NADH-quinone oxidoreductase subunit 9 from Paracoccus denitrificans.